Here is a 417-residue protein sequence, read N- to C-terminus: NADH-quinone oxidoreductase subunit D (417 aa).

This sequence belongs to the complex I 49 kDa subunit family. In terms of assembly, NDH-1 is composed of 14 different subunits. Subunits NuoB, C, D, E, F, and G constitute the peripheral sector of the complex.

Its subcellular location is the cell inner membrane. It catalyses the reaction a quinone + NADH + 5 H(+)(in) = a quinol + NAD(+) + 4 H(+)(out). NDH-1 shuttles electrons from NADH, via FMN and iron-sulfur (Fe-S) centers, to quinones in the respiratory chain. The immediate electron acceptor for the enzyme in this species is believed to be ubiquinone. Couples the redox reaction to proton translocation (for every two electrons transferred, four hydrogen ions are translocated across the cytoplasmic membrane), and thus conserves the redox energy in a proton gradient. This chain is NADH-quinone oxidoreductase subunit D, found in Hydrogenovibrio crunogenus (strain DSM 25203 / XCL-2) (Thiomicrospira crunogena).